The following is a 213-amino-acid chain: Ribosomal RNA small subunit methyltransferase G (213 aa).

Residues Gly72, Phe77, 125 to 126 (IE), and Arg141 contribute to the S-adenosyl-L-methionine site.

This sequence belongs to the methyltransferase superfamily. RNA methyltransferase RsmG family.

It is found in the cytoplasm. It catalyses the reaction guanosine(527) in 16S rRNA + S-adenosyl-L-methionine = N(7)-methylguanosine(527) in 16S rRNA + S-adenosyl-L-homocysteine. Functionally, specifically methylates the N7 position of guanine in position 527 of 16S rRNA. This Rhizobium meliloti (strain 1021) (Ensifer meliloti) protein is Ribosomal RNA small subunit methyltransferase G.